The primary structure comprises 840 residues: Serotype-specific mannosyltransferase WbdA (840 aa).

Residues 2 to 399 form an alpha-(1-&gt;2)-mannosyltransferase region; sequence HILIDVQGYQ…WANTAHLAIE (398 aa). Residues 456–829 form an alpha-(1-&gt;3)-mannosyltransferase region; the sequence is KLLVDISVLA…WKQSAEFLLK (374 aa).

This sequence belongs to the glycosyltransferase group 1 family. Glycosyltransferase 4 subfamily. In terms of assembly, monomer. Interacts with the C-terminal region of WbdD. Interacts with WbdD via a surface-exposed alpha-helix in the C-terminal mannosyltransferase domain. However, the C-terminal domain is unable to interact with WbdD in the absence of its N-terminal partner.

It is found in the cell inner membrane. The catalysed reaction is [alpha-D-Man-(1-&gt;3)-alpha-D-Man-(1-&gt;3)-alpha-D-Man-(1-&gt;2)-alpha-D-Man-(1-&gt;2)](n)-alpha-D-Man-(1-&gt;3)-alpha-D-Man-(1-&gt;3)-alpha-D-Man-(1-&gt;3)-alpha-D-GlcNAc-di-trans,octa-cis-undecaprenyl diphosphate + 2 GDP-alpha-D-mannose = alpha-D-Man-(1-&gt;2)-alpha-D-Man-(1-&gt;2)-[alpha-D-Man-(1-&gt;3)-alpha-D-Man-(1-&gt;3)-alpha-D-Man-(1-&gt;2)-alpha-D-Man-(1-&gt;2)](n)-alpha-D-Man-(1-&gt;3)-alpha-D-Man-(1-&gt;3)-alpha-D-Man-(1-&gt;3)-alpha-D-GlcNAc-di-trans,octa-cis-undecaprenyl diphosphate + 2 GDP + 2 H(+). It carries out the reaction alpha-D-Man-(1-&gt;2)-alpha-D-Man-(1-&gt;2)-[alpha-D-Man-(1-&gt;3)-alpha-D-Man-(1-&gt;3)-alpha-D-Man-(1-&gt;2)-alpha-D-Man-(1-&gt;2)](n)-alpha-D-Man-(1-&gt;3)-alpha-D-Man-(1-&gt;3)-alpha-D-Man-(1-&gt;3)-alpha-D-GlcNAc-di-trans,octa-cis-undecaprenyl diphosphate + 2 GDP-alpha-D-mannose = [alpha-D-Man-(1-&gt;3)-alpha-D-Man-(1-&gt;3)-alpha-D-Man-(1-&gt;2)-alpha-D-Man-(1-&gt;2)](n+1)-alpha-D-Man-(1-&gt;3)-alpha-D-Man-(1-&gt;3)-alpha-D-Man-(1-&gt;3)-alpha-D-GlcNAc-di-trans,octa-cis-undecaprenyl diphosphate + 2 GDP + 2 H(+). It functions in the pathway bacterial outer membrane biogenesis; LPS O-antigen biosynthesis. With respect to regulation, the alpha-(1-&gt;2)-mannosyltransferase activity of the N-terminal domain is regulated by the activity of the C-terminal alpha-(1-&gt;3)-mannosyltransferase. The relative concentration of WbdA and WbdD is critical in determining the O polysaccharide (OPS) modal chain length. OPS chain length increases with increasing concentration of WbdA, but the maximum length does not increase beyond the wild-type modal length, despite substantial increases in WbdA concentration. Functionally, mannosyltransferase involved in the biosynthesis of the repeat unit of the lipopolysaccharide (LPS) O-antigen region. Catalyzes the polymerization of a tetrasaccharide repeat unit containing two alpha-(1-&gt;3)- and two alpha-(1-&gt;2)-linked mannopyranose residues. Extension is terminated by the action of the chain terminator bifunctional methyltransferase/kinase WbdD. The chain is Serotype-specific mannosyltransferase WbdA from Escherichia coli.